The primary structure comprises 306 residues: Reticulocalbin-2 (306 aa).

An N-terminal signal peptide occupies residues 1–22 (MESPTLLGLLLLLLGGPGTSLG). EF-hand domains lie at 50-85 (EQQK…SFKS), 86-121 (YIIE…RVID), 144-173 (KKRF…EEAD), 175-210 (MKEF…DPAA), 226-251 (NDYD…NNEG), and 252-287 (LAQE…FLNS). Positions 99, 101, 103, 105, and 110 each coordinate Ca(2+). Ca(2+) contacts are provided by D188, D190, D192, E199, D229, D231, D233, K235, E240, D265, D267, D269, R271, and E276.

Belongs to the CREC family. In terms of assembly, may bind phospholipase A2, since the rat reticulocalbin-2 has been isolated on the phospholipase complex taipoxin columns. In terms of tissue distribution, expressed by the venom gland.

It localises to the secreted. The polypeptide is Reticulocalbin-2 (Crotalus adamanteus (Eastern diamondback rattlesnake)).